The sequence spans 283 residues: uncharacterized protein (283 aa).

Solcar repeat units follow at residues 14-95 (QPVW…LKHL), 102-185 (NDHA…SEAV), and 190-274 (GLAL…TLQG). The next 6 helical transmembrane spans lie at 20–40 (TLAG…FDVI), 70–90 (GNVV…VAFS), 105–125 (AVNF…SYPL), 157–177 (FFPG…CFFM), 184–204 (AVLS…IAGA), and 249–266 (GLSV…ITML).

Belongs to the mitochondrial carrier (TC 2.A.29) family.

Its subcellular location is the mitochondrion inner membrane. This is an uncharacterized protein from Schizosaccharomyces pombe (strain 972 / ATCC 24843) (Fission yeast).